The following is a 197-amino-acid chain: HTH-type transcriptional regulator BetI (197 aa).

Positions 8-68 (PIRRQQLIEA…ATMRYLMNAL (61 aa)) constitute an HTH tetR-type domain. Positions 31-50 (SIALIARLAGVSNGIISHYF) form a DNA-binding region, H-T-H motif.

It functions in the pathway amine and polyamine biosynthesis; betaine biosynthesis via choline pathway [regulation]. In terms of biological role, repressor involved in the biosynthesis of the osmoprotectant glycine betaine. It represses transcription of the choline transporter BetT and the genes of BetAB involved in the synthesis of glycine betaine. The protein is HTH-type transcriptional regulator BetI of Pseudomonas fluorescens (strain SBW25).